The primary structure comprises 55 residues: Large ribosomal subunit protein bL32c (55 aa).

The protein belongs to the bacterial ribosomal protein bL32 family.

It localises to the plastid. The protein localises to the chloroplast. The chain is Large ribosomal subunit protein bL32c from Daucus carota (Wild carrot).